Reading from the N-terminus, the 1059-residue chain is MLSVENGLDPRAAIQVIKKKLVGSVKALQKQHVSLDTVVTSEDGDANTMCSALEAVFIHGLHAKYIRAEAGGKRKKHTHQKPLPQPVFWPLLKAVTHKHIISDLEHLVFINTDVGRCRAWLRLALNDGLMECYLKLLLQEPARLCEYYQPTALLRDAEEAEFLLSFLQGLTSLSFELSYKSAILNEWTLTPLSLSGLCPLSELDPLTVSGAELQRKESLDSISHSSGSEDIEVQHSGHKIRRDRKLTASSLSLDTASSSQLSCSLNSDSCLLQENGPKSPDHSEEPMSYDSDLGTANADDSDRSLQEVLSEFSKAQVNSAPSSGPSQESDTPMFQTPLSLHSLANSTHLLFEGSEEPFPAHTSSGTSSGHKHQPQESPDMQPLGTAQAGPAGSTSDQQPSSPVAGAADQGSEPWKALEYGRVGPKLVVSSPTSPKGKSWISEDDFCRPPKEHALKNTSDLCISPLQGTPELRTALHGPFSQGPRKSCSLGALDKACVSSLDYRNAQTAPSPAVTQDHKNFCVVHRRQMGLSNPFRGLMKLGTVARRGAMGIWKEFFCELSPLELRLYLSDEERTCVESCSLLRCEAVGPAHSDGRFELVFSGKKLALRASSQDEAEDWLDRVREALQKVRPQQEEEWVNIQYPDQAEDSPEAPPDNLPPYSALLPEHAGAQGIQPNWTSAQVPEPDAIKESLLYLYADRTWIPYIFSLSLESLKCFRVRNNEKMLSDSHGVETIRDILPDTSLGGPAFFKIITAKAVLKLQAKNTEEAAHWRDLVRKVLASYLESVQEAVTLAGSLDENCQEVLKFATRENGFLLQYLVAIPTEKGLDSQGCFCAGCSRQIGFSFVRPKLCAFSGLYYCDFCHQDDASVIPARIIHNWDLTKRPVCRQALKFLAQIRAQPLINLQLVNASLYEHVERMHLIGRSREQLKLLGDYLGLCRSGALKELSKRLSHRNYLLESPHKFSVADLQQIAEGVYEGFLKALIEFASQHVYHCDLCTQRGFICQICHHQDIIFPFEFDTTVRCAECRTVFHQSCQAVVRKGCPRCARRRKYQEQNTVS.

The 143-residue stretch at threonine 40 to alanine 182 folds into the RUN domain. The residue at position 218 (serine 218) is a Phosphoserine. Disordered stretches follow at residues serine 218–arginine 244, leucine 272–phenylalanine 334, and serine 354–serine 411. 2 stretches are compositionally biased toward polar residues: residues serine 313–phenylalanine 334 and glycine 392–serine 401. Phosphoserine occurs at positions 430, 433, and 488. A PH 1 domain is found at glycine 536–glutamine 627. Residues glutamate 634–isoleucine 640 carry the LIR motif. Positions leucine 657–serine 1059 are interaction with RAB7A. One can recognise a PH 2 domain in the interval aspartate 686–alanine 780. The Phorbol-ester/DAG-type zinc finger occupies glutamine 989–cysteine 1043.

Interacts (via N- and C-terminus) with RAB7A (GTP-bound form). Simultaneously interacts with RAB7A and ARL8B; bringing about clustering and fusion of late endosomes and lysosomes. Interacts (via RUN domain) with ARL8B (GTP-bound form); the interaction is required for PLEKHM1 localization to lysosomes and for ARL8B function in delivery and degradation of endocytic and autophagic cargo in lysosomes. PLEKHM1 and PLEKHM2 compete for interaction with ARL8B. Interacts with ARL8A; the interaction is weaker than with ARL8B. Interacts with VPS41, VPS11, VPS18, VPS33A and VPS39; indicative for an association with the HOPS complex; the interactions with, at least, VPS41, VPS11, VPS18 and VPS33A require ARL8B. Interacts with GABARAP, GABARAPL, GABARAPL2, MAP1LC3A, MAP1LC3B and MAP1LC3C. Interacts with PAFAH1B. Interacts (via N- and C-terminus) with NDEL1. Interacts (via C-terminus) with MAP3K7. Interacts (via N- and C-terminus) with FAM98A. Interacts (via C-terminus) with DEF8; this interaction is weak but increased in a RAB7A-dependent manner. May interact with sialyl-lex-positive protein. As to expression, expressed in testis, skeletal muscle, lung, liver, spleen, brain, heart, kidney and bone. Weakly expressed in monocytes (at protein level).

It localises to the autolysosome membrane. It is found in the endosome membrane. Its subcellular location is the late endosome membrane. The protein resides in the lysosome membrane. Functionally, acts as a multivalent adapter protein that regulates Rab7-dependent and HOPS complex-dependent fusion events in the endolysosomal system and couples autophagic and the endocytic trafficking pathways. Acts as a dual effector of RAB7A and ARL8B that simultaneously binds these GTPases, bringing about clustering and fusion of late endosomes and lysosomes. Required for late stages of endolysosomal maturation, facilitating both endocytosis-mediated degradation of growth factor receptors and autophagosome clearance. Interaction with Arl8b is a crucial factor in the terminal maturation of autophagosomes and to mediate autophagosome-lysosome fusion. Positively regulates lysosome peripheral distribution and ruffled border formation in osteoclasts. May be involved in negative regulation of endocytic transport from early endosome to late endosome/lysosome implicating its association with Rab7. May have a role in sialyl-lex-mediated transduction of apoptotic signals. Involved in bone resorption. The protein is Pleckstrin homology domain-containing family M member 1 of Rattus norvegicus (Rat).